The following is a 1025-amino-acid chain: Dihydropyrimidine dehydrogenase [NADP(+)] (1025 aa).

Residues 1 to 3 (MAP) constitute a propeptide that is removed on maturation. A 4Fe-4S ferredoxin-type 1 domain is found at 69–100 (ERGALREAMRCLKCADAPCQKSCPTHLDIKSF). Residues Cys79, Cys82, Cys87, and Cys91 each contribute to the [4Fe-4S] cluster site. An FAD-binding site is contributed by Val129. The [4Fe-4S] cluster site is built by Cys130, Cys136, Cys140, and Gln156. Residues 194 to 198 (GAGPA), 218 to 226 (EKQEYVGGL), Arg235, and Leu261 each bind FAD. Residues 340-343 (AGDT), 364-365 (RK), and Arg371 contribute to the NADP(+) site. The residue at position 384 (Lys384) is an N6-acetyllysine. NADP(+) is bound by residues 437 to 439 (AFG) and 481 to 487 (DIVGMAN). 480 to 489 (GDIVGMANTT) contacts FAD. FMN is bound by residues Ser550 and 574–575 (KT). Residues Asn609 and 668-670 (NLS) each bind substrate. Cys671 functions as the Proton acceptor in the catalytic mechanism. Lys709 contacts FMN. 736 to 737 (NT) is a binding site for substrate. Residues Gly767, 793–795 (TGG), and 816–817 (CS) each bind FMN. 4Fe-4S ferredoxin-type domains follow at residues 944–976 (VVAV…FDPE) and 978–1007 (HLPT…MVSR). The [4Fe-4S] cluster site is built by Cys953, Cys956, Cys959, Cys963, Cys986, Cys989, Cys992, and Cys996.

It belongs to the dihydropyrimidine dehydrogenase family. As to quaternary structure, homodimer. FAD is required as a cofactor. It depends on FMN as a cofactor. [4Fe-4S] cluster serves as cofactor.

The protein localises to the cytoplasm. It carries out the reaction 5,6-dihydrouracil + NADP(+) = uracil + NADPH + H(+). The enzyme catalyses 5,6-dihydrothymine + NADP(+) = thymine + NADPH + H(+). Its pathway is amino-acid biosynthesis; beta-alanine biosynthesis. Its activity is regulated as follows. Inactivated by 5-iodouracil. In terms of biological role, involved in pyrimidine base degradation. Catalyzes the reduction of uracil and thymine. The chain is Dihydropyrimidine dehydrogenase [NADP(+)] (DPYD) from Sus scrofa (Pig).